A 1230-amino-acid chain; its full sequence is MASSHFGPASPASSTPPPSSAYARLIAPTITRNSSSSSSRSTTTCSSTSSVQAVPMRPPPIETSTAATSRSQLPSNRHSENEAEHDTSYTSPGLSVGGRGGLARNGPRSNRLGTSPQARHVPPSIVALSPSPSPILNMASKRQSNTETVSGTSPSTPLGKSFLAQQDLSPNSSTIPLRVTISVDPNDRLSHDRESHSAERPRSSGNSPVRGRHGHLSTPSSPTNSYRALGGKPRTLSVDAGQNWGGSHRSRARDGDDRERRQSQVSSASSGALKKHSLDDWVLGEELGVGSYSTVYCVTPSANTHSPTSPQPARKYALKVINQAHLIQEKKVKYAMVERDALIRLSDPRPSKGHKRGVSSSSSSGYAQTGSAGKRRSTASIGGQSSMASVSGGTVSNSKKDTRDRLSIVTTSSAASSPVLTASSGSTQLSPTAVSGGGGNIKGRRPSRSAEPPTPVQEQTEMLIRGGEDGKDGQDGQETPSREWDRDRDWDNMTRSRPPSPVREESAEGGEKEKDEEERSGAEPVELGAAIHLTLPPPQIPSTPEPRGSPLLSTDGHRTSRETPRDRPHLTPKRRRQSLAPSERSVKSASTTGKMSAAAHPGVVRLYSTFNDSSSLYFVLSLASNGELASIIRKHGSLDITSARYYAAQLIDTLEFVHSRGVIHRDLKPENILLDEDMRIKITDFGSAKIIAKDEPIVDDSSRSRSFVGSADFVSPEVLRNEVATTASDIWAFGCVLYQFICGKPPFRGATDYLTFQKILKREVEFPKGIDEDAKSLIDTILDLEPNLRPSITFIKTHPFFQSIDFSTLWTIPAPPISSGLREPSKSTTLAQLEASDIWGVFEGSDVGEEDEDGFEYDADTVSPRPEGGAVGEGMMEPLFDRRAAASAVHNVDHPKFSRLRNQYINLGEDLDPPRPAYAGAGTGGRGKREKEVEKKKGEKARGLSHGSESSGGNRSALAGWLEAIKFGGAGGGGMSGSATSVAASDTVRTPGTGTGTGPGSRPGSRAGIPSFGLGPGSGSRSNRGSGASMRSDEARDLSMSLGGLRMNMSKASEFDKWTPLLLANESIIFTSPITLRTSSPALQLHLPAFLLPAPKKRQLVLTDFPRLLMIKDDNEADGDPAGSDSGAGLSSSSHVESGGGGVGGGGRGGGHGSLRIKGEAVFVPRPSTATGSSTTKGGGYSAVPNAVMDVQEKGSKGFTVQTPGMVYYCHVDSVELRAKWMAAIHRVGL.

Residues M1–S277 are disordered. Low complexity predominate over residues S34–S50. A compositionally biased stretch (polar residues) spans E62–N76. Over residues R77 to T87 the composition is skewed to basic and acidic residues. 2 stretches are compositionally biased toward polar residues: residues P107–Q117 and S140–I175. Over residues P185–R202 the composition is skewed to basic and acidic residues. Residues S217–Y226 are compositionally biased toward polar residues. Positions A252–Q262 are enriched in basic and acidic residues. Residues W281–F801 form the Protein kinase domain. ATP contacts are provided by residues S291 to S293 and K319. Disordered regions lie at residues L345–A522 and T534–A597. Composition is skewed to polar residues over residues T378–N397 and I408–A433. Basic and acidic residues-rich tracts occupy residues G466–T494 and V502–G521. Over residues L535–P544 the composition is skewed to pro residues. The segment covering D555 to H569 has biased composition (basic and acidic residues). ATP-binding positions include S621–A623 and E627. Residue D666 is the Proton acceptor of the active site. E670 and D684 together coordinate ATP. Acidic residues predominate over residues E850–A859. 4 disordered regions span residues E850–V871, L907–R955, G972–A1035, and E1116–H1152. Basic and acidic residues predominate over residues G927–R942. Low complexity-rich tracts occupy residues G977–G992, R1002–M1030, and D1120–E1137. Residues S1138–H1152 are compositionally biased toward gly residues.

The protein belongs to the protein kinase superfamily. AGC Ser/Thr protein kinase family. PDPK1 subfamily.

It carries out the reaction L-seryl-[protein] + ATP = O-phospho-L-seryl-[protein] + ADP + H(+). It catalyses the reaction L-threonyl-[protein] + ATP = O-phospho-L-threonyl-[protein] + ADP + H(+). Serine/threonine-protein kinase that functions in the sphingolipid-mediated signaling pathway, regulating organization of the plasma membrane. May phosphorylate PKC1 to activate the cell integrity MAPK cascade during cell wall and membrane stress. May regulate sphingolipid metabolism upstream of YPK1. In Cryptococcus neoformans var. grubii serotype A (strain H99 / ATCC 208821 / CBS 10515 / FGSC 9487) (Filobasidiella neoformans var. grubii), this protein is Serine/threonine-protein kinase PDK1.